Reading from the N-terminus, the 180-residue chain is Alkyl hydroperoxide reductase AhpD (180 aa).

The active-site Proton donor is the C131. The cysteines at positions 131 and 134 are disulfide-linked. The active-site Cysteine sulfenic acid (-SOH) intermediate is C134.

This sequence belongs to the AhpD family.

It catalyses the reaction N(6)-[(R)-dihydrolipoyl]-L-lysyl-[lipoyl-carrier protein] + a hydroperoxide = N(6)-[(R)-lipoyl]-L-lysyl-[lipoyl-carrier protein] + an alcohol + H2O. Antioxidant protein with alkyl hydroperoxidase activity. Required for the reduction of the AhpC active site cysteine residues and for the regeneration of the AhpC enzyme activity. The polypeptide is Alkyl hydroperoxide reductase AhpD (Beijerinckia indica subsp. indica (strain ATCC 9039 / DSM 1715 / NCIMB 8712)).